Reading from the N-terminus, the 82-residue chain is Progonadoliberin-3 (82 aa).

The N-terminal stretch at methionine 1–serine 23 is a signal peptide. Pyrrolidone carboxylic acid is present on glutamine 24. Glycine 33 is subject to Glycine amide.

It belongs to the GnRH family.

Its subcellular location is the secreted. Stimulates the secretion of gonadotropins. The sequence is that of Progonadoliberin-3 (gnrh3) from Oncorhynchus masou (Cherry salmon).